Consider the following 773-residue polypeptide: MKKSSDKSPVRQHDTATQINSDAVSSSTSFTDSDSTCSFLTPSMEFPDRISFRRIDFSEAAPTGVVLPSTSSELTRSNSSENKIPNEDISVSTSSRYLVFDKILALMKKSPGRRGDKTSPARRLDRSDAVRRNIDYDAGEDSSSLLITRSLDFPNRTSFRVDGVDDGEIDRIYQYIGVSGPEDFAISSDAWKARMEHERSSSDVVNKLKSLDLDSREAGPSGGVVASSSMNHKFQGHDLSEAGSIGVVVASNFTLSESNKIENLNSLRDKEIVDGDMVENRCGIERKPTILVKSRGYLVHNDDVGVGGGIKGVRPPVLNVPRADKEVVDGGTVESKSGIEWKPTILVKSKGYLVSNDGGIKGVTSPVLNLRPTDKEVVDSGTVENRRGIKGVRPSVLKPPPVMKLPPVDLPGSSWDILTHFAPDSEIVRRPSSSSSSENGCDEEEAEDDKVEKEETGDMFIQLEDTTDEACSFTTNEGDSSSTVSNTSPICVSGGSINTSWQKGQLLRQGSFGSVYEAISEDGDFFAVKEVSLLDQGSQAQECIQQLEGEIALLSQLEHQNILRYRGTDKDGSNLYIFLELVTQGSLLELYRRYQIRDSLISLYTKQILDGLKYLHHKGFIHRDIKCATILVDANGTVKLADFGLAKVSKLNDIKSRKETLFWMAPEVINRKDNDGYRSPADIWSLGCTVLEMCTGQIPYSDLEPVEALFRIRRGTLPEVPDTLSLDARHFILKCLKLNPEERPTATELLNHPFVRRPLPSSGSGSTSPLIRR.

Over residues 1 to 14 (MKKSSDKSPVRQHD) the composition is skewed to basic and acidic residues. A disordered region spans residues 1-35 (MKKSSDKSPVRQHDTATQINSDAVSSSTSFTDSDS). Over residues 21 to 35 (SDAVSSSTSFTDSDS) the composition is skewed to low complexity. Phosphoserine is present on residues S79 and S150. Positions 100-493 (FDKILALMKK…VSNTSPICVS (394 aa)) are regulatory region. S365 is subject to Phosphoserine; by MAPK4. The segment at 426–455 (EIVRRPSSSSSSENGCDEEEAEDDKVEKEE) is disordered. Positions 440-449 (GCDEEEAEDD) are enriched in acidic residues. One can recognise a Protein kinase domain in the interval 501-755 (WQKGQLLRQG…ATELLNHPFV (255 aa)). ATP-binding positions include 507–515 (LRQGSFGSV) and K529. Residue D624 is the Proton acceptor of the active site. Residue S768 is modified to Phosphoserine.

The protein belongs to the protein kinase superfamily. STE Ser/Thr protein kinase family. MAP kinase kinase kinase subfamily. In terms of assembly, interacts with MPK4. Phosphorylated by MPK4 upon treatment with flg22. In terms of tissue distribution, expressed at least in rosette leaves (at protein level).

The catalysed reaction is L-seryl-[protein] + ATP = O-phospho-L-seryl-[protein] + ADP + H(+). It catalyses the reaction L-threonyl-[protein] + ATP = O-phospho-L-threonyl-[protein] + ADP + H(+). Its function is as follows. Triggers SUMM2-mediated immune responses, including cell death and defense responses. Probably inhibited by the MEKK1-MKK1/ MKK2-MPK4 kinase cascade to adjust plant defense. Seems to contribute in transducing external glutamate (L-Glu) signal that elicits large-scale changes in root architecture. The sequence is that of Mitogen-activated protein kinase kinase kinase 9 from Arabidopsis thaliana (Mouse-ear cress).